Consider the following 28-residue polypeptide: Sarcolamban A (28 aa).

A helical membrane pass occupies residues 7 to 27 (LFTTFGILAILLFFLYLIYAV).

Interacts with SERCA. As to expression, strongly expressed in embryonic and larval somatic muscles and postembryonic heart.

It is found in the sarcoplasmic reticulum membrane. Its subcellular location is the cell membrane. The protein resides in the sarcolemma. It localises to the T-tubule. Its function is as follows. Plays an essential role in the regulation of calcium transport at the sarcoplasmic reticulum (SR), which is secondarily required for regular muscle contraction. This is Sarcolamban A from Drosophila melanogaster (Fruit fly).